We begin with the raw amino-acid sequence, 446 residues long: Ribosomal protein uS12 methylthiotransferase RimO (446 aa).

The 116-residue stretch at 4–119 folds into the MTTase N-terminal domain; sequence LKVGLISLGC…LVENINNFIS (116 aa). [4Fe-4S] cluster-binding residues include Cys-13, Cys-48, Cys-82, Cys-157, Cys-161, and Cys-164. Residues 143–373 form the Radical SAM core domain; sequence TTKSHTAYLR…MMLQKHIIYS (231 aa). The 67-residue stretch at 376 to 442 folds into the TRAM domain; it reads KYKIGNKYKV…EYDLVGVVYD (67 aa).

The protein belongs to the methylthiotransferase family. RimO subfamily. [4Fe-4S] cluster serves as cofactor.

Its subcellular location is the cytoplasm. The enzyme catalyses L-aspartate(89)-[ribosomal protein uS12]-hydrogen + (sulfur carrier)-SH + AH2 + 2 S-adenosyl-L-methionine = 3-methylsulfanyl-L-aspartate(89)-[ribosomal protein uS12]-hydrogen + (sulfur carrier)-H + 5'-deoxyadenosine + L-methionine + A + S-adenosyl-L-homocysteine + 2 H(+). Catalyzes the methylthiolation of an aspartic acid residue of ribosomal protein uS12. This is Ribosomal protein uS12 methylthiotransferase RimO from Clostridium kluyveri (strain ATCC 8527 / DSM 555 / NBRC 12016 / NCIMB 10680 / K1).